The sequence spans 269 residues: Hydroxyethylthiazole kinase (269 aa).

Met-45 lines the substrate pocket. Arg-121 and Thr-167 together coordinate ATP. Gly-194 serves as a coordination point for substrate.

Belongs to the Thz kinase family. Mg(2+) is required as a cofactor.

It carries out the reaction 5-(2-hydroxyethyl)-4-methylthiazole + ATP = 4-methyl-5-(2-phosphooxyethyl)-thiazole + ADP + H(+). The protein operates within cofactor biosynthesis; thiamine diphosphate biosynthesis; 4-methyl-5-(2-phosphoethyl)-thiazole from 5-(2-hydroxyethyl)-4-methylthiazole: step 1/1. Catalyzes the phosphorylation of the hydroxyl group of 4-methyl-5-beta-hydroxyethylthiazole (THZ). The protein is Hydroxyethylthiazole kinase of Geobacillus sp. (strain WCH70).